The sequence spans 117 residues: Large ribosomal subunit protein uL22 (117 aa).

This sequence belongs to the universal ribosomal protein uL22 family. Part of the 50S ribosomal subunit.

In terms of biological role, this protein binds specifically to 23S rRNA; its binding is stimulated by other ribosomal proteins, e.g. L4, L17, and L20. It is important during the early stages of 50S assembly. It makes multiple contacts with different domains of the 23S rRNA in the assembled 50S subunit and ribosome. Its function is as follows. The globular domain of the protein is located near the polypeptide exit tunnel on the outside of the subunit, while an extended beta-hairpin is found that lines the wall of the exit tunnel in the center of the 70S ribosome. This chain is Large ribosomal subunit protein uL22, found in Latilactobacillus sakei subsp. sakei (strain 23K) (Lactobacillus sakei subsp. sakei).